Consider the following 341-residue polypeptide: S-adenosylmethionine:tRNA ribosyltransferase-isomerase (341 aa).

Belongs to the QueA family. Monomer.

Its subcellular location is the cytoplasm. It carries out the reaction 7-aminomethyl-7-carbaguanosine(34) in tRNA + S-adenosyl-L-methionine = epoxyqueuosine(34) in tRNA + adenine + L-methionine + 2 H(+). Its pathway is tRNA modification; tRNA-queuosine biosynthesis. Transfers and isomerizes the ribose moiety from AdoMet to the 7-aminomethyl group of 7-deazaguanine (preQ1-tRNA) to give epoxyqueuosine (oQ-tRNA). This chain is S-adenosylmethionine:tRNA ribosyltransferase-isomerase, found in Desulfitobacterium hafniense (strain DSM 10664 / DCB-2).